The chain runs to 791 residues: Nuclear cap-binding protein subunit 1-B (791 aa).

The tract at residues 1-24 (MSRRRHSDENDGGQPHKRRRTSEP) is disordered. Positions 28-240 (EDRLESLICR…CLWAQVQKLK (213 aa)) constitute an MIF4G domain. Residues 641 to 714 (LHSTIRKMNK…SEQKNLFLVI (74 aa)) adopt a coiled-coil conformation. Residues 664–687 (QRLAKQHKHRDSDDNDEDSGRKDG) form a disordered region.

This sequence belongs to the NCBP1 family. As to quaternary structure, component of the nuclear cap-binding complex (CBC), a heterodimer composed of ncbp1/cbp80 and ncbp2/cbp20 that interacts with m7GpppG-capped RNA. Component of an alternative nuclear cap-binding complex (CBC) composed of ncbp1/cbp80 and ncbp3.

It is found in the nucleus. The protein localises to the cytoplasm. Component of the cap-binding complex (CBC), which binds cotranscriptionally to the 5'-cap of pre-mRNAs and is involved in various processes such as pre-mRNA splicing, translation regulation, nonsense-mediated mRNA decay, RNA-mediated gene silencing (RNAi) by microRNAs (miRNAs) and mRNA export. The CBC complex is involved in mRNA export from the nucleus, leading to the recruitment of the mRNA export machinery to the 5'-end of mRNA and to mRNA export in a 5' to 3' direction through the nuclear pore. The CBC complex is also involved in mediating U snRNA and intronless mRNAs export from the nucleus. The CBC complex is essential for a pioneer round of mRNA translation, before steady state translation when the CBC complex is replaced by cytoplasmic cap-binding protein eIF4E. The pioneer round of mRNA translation mediated by the CBC complex plays a central role in nonsense-mediated mRNA decay (NMD), NMD only taking place in mRNAs bound to the CBC complex, but not on eIF4E-bound mRNAs. The CBC complex enhances NMD in mRNAs containing at least one exon-junction complex (EJC), promoting the interaction between UPF1 and UPF2. The CBC complex is also involved in 'failsafe' NMD, which is independent of the EJC complex, while it does not participate in Staufen-mediated mRNA decay (SMD). During cell proliferation, the CBC complex is also involved in microRNAs (miRNAs) biogenesis via its interaction with SRRT/ARS2 and is required for miRNA-mediated RNA interference. The CBC complex also acts as a negative regulator of parn, thereby acting as an inhibitor of mRNA deadenylation. In the CBC complex, NCBP1/CBP80 does not bind directly capped RNAs (m7GpppG-capped RNA) but is required to stabilize the movement of the N-terminal loop of NCBP2/CBP20 and lock the CBC into a high affinity cap-binding state with the cap structure. Associates with NCBP3 to form an alternative cap-binding complex (CBC) which plays a key role in mRNA export. The conventional CBC with NCBP2 binds both small nuclear RNA (snRNA) and messenger (mRNA) and is involved in their export from the nucleus whereas the alternative CBC with NCBP3 does not bind snRNA and associates only with mRNA thereby playing a role only in mRNA export. This is Nuclear cap-binding protein subunit 1-B (ncbp1-b) from Xenopus laevis (African clawed frog).